The sequence spans 691 residues: Elongation factor G (691 aa).

The tr-type G domain occupies 6-281 (SRYRNIGIMA…GVVDFLPSPI (276 aa)). GTP contacts are provided by residues 15–22 (AHIDAGKT), 79–83 (DTPGH), and 133–136 (NKMD).

Belongs to the TRAFAC class translation factor GTPase superfamily. Classic translation factor GTPase family. EF-G/EF-2 subfamily.

The protein localises to the cytoplasm. In terms of biological role, catalyzes the GTP-dependent ribosomal translocation step during translation elongation. During this step, the ribosome changes from the pre-translocational (PRE) to the post-translocational (POST) state as the newly formed A-site-bound peptidyl-tRNA and P-site-bound deacylated tRNA move to the P and E sites, respectively. Catalyzes the coordinated movement of the two tRNA molecules, the mRNA and conformational changes in the ribosome. The sequence is that of Elongation factor G from Wolbachia pipientis subsp. Culex pipiens (strain wPip).